Here is a 459-residue protein sequence, read N- to C-terminus: Exodeoxyribonuclease 7 large subunit (459 aa).

Belongs to the XseA family. Heterooligomer composed of large and small subunits.

It is found in the cytoplasm. The enzyme catalyses Exonucleolytic cleavage in either 5'- to 3'- or 3'- to 5'-direction to yield nucleoside 5'-phosphates.. In terms of biological role, bidirectionally degrades single-stranded DNA into large acid-insoluble oligonucleotides, which are then degraded further into small acid-soluble oligonucleotides. This Pseudomonas fluorescens (strain SBW25) protein is Exodeoxyribonuclease 7 large subunit.